The primary structure comprises 524 residues: MSSIYGLLNFMSATELLLAITVFCLGFWVVRALRTQVPKGLKTPPGPWGLPILGHVLTLGKNPHLSLTKLSKQYGDVLQIRIGSTPVVVLSGLDTIRQALVRQGDDFKGRPDFYSFTLITNGKSMTFNPDCGPVWAARRRLAQDALKSFSIALDPASASSCYLEEYVIKEADYLISKFQKLMAEVGHFDPDRYLVVSVTNVICAMCFGQRYDHDDQELLSIVNLSNEFGKVTGSGYPPDFIPILRYLPNSSLDAFKDLNKKFYSFMQKSVKEHYRTFEKGHIRDITDSLIEHCQDKSLDENANVQLSDDRVINIIVDLFGAGFDTVTTAISWSLMYLVTNPGVQRKIQEELDTVIGRSRRPRLCDRSQLPYLEAFILETFRHSSFLPFTIPHSTTRDTSLCGFYIPKGHCVFVNQWQINHNQELWGDPNKFRPERFLTSSGTLDKVLSGKVTLFGLGKRKCIGETIGRLEVFLFLAILLQQIEFTVSPGEKVDMTPIYGLTLKHARCEYFQAQTRSSGPQHPQA.

A mitochondrial targeting signal region spans residues 33–44 (LRTQVPKGLKTP). Residue serine 71 is glycosylated (O-linked (GlcNAc) serine). Residue phenylalanine 228 coordinates substrate. Cysteine 461 provides a ligand contact to heme.

The protein belongs to the cytochrome P450 family. As to quaternary structure, interacts with cytosolic chaperones HSP70 and HSP90; this interaction is required for initial targeting to mitochondria. Interacts (via mitochondrial targeting signal) with TOMM40 (via N-terminus); this interaction is required for translocation across the mitochondrial outer membrane. Heme serves as cofactor.

Its subcellular location is the endoplasmic reticulum membrane. It is found in the mitochondrion inner membrane. The protein localises to the microsome membrane. The protein resides in the cytoplasm. It catalyses the reaction an organic molecule + reduced [NADPH--hemoprotein reductase] + O2 = an alcohol + oxidized [NADPH--hemoprotein reductase] + H2O + H(+). It carries out the reaction estrone + reduced [NADPH--hemoprotein reductase] + O2 = 2-hydroxyestrone + oxidized [NADPH--hemoprotein reductase] + H2O + H(+). The catalysed reaction is estrone + reduced [NADPH--hemoprotein reductase] + O2 = 4-hydroxyestrone + oxidized [NADPH--hemoprotein reductase] + H2O + H(+). The enzyme catalyses estrone + reduced [NADPH--hemoprotein reductase] + O2 = 6alpha-hydroxyestrone + oxidized [NADPH--hemoprotein reductase] + H2O + H(+). It catalyses the reaction estrone + reduced [NADPH--hemoprotein reductase] + O2 = 15alpha-hydroxyestrone + oxidized [NADPH--hemoprotein reductase] + H2O + H(+). It carries out the reaction estrone + reduced [NADPH--hemoprotein reductase] + O2 = 16alpha-hydroxyestrone + oxidized [NADPH--hemoprotein reductase] + H2O + H(+). The catalysed reaction is 17beta-estradiol + reduced [NADPH--hemoprotein reductase] + O2 = 2-hydroxy-17beta-estradiol + oxidized [NADPH--hemoprotein reductase] + H2O + H(+). The enzyme catalyses 17beta-estradiol + reduced [NADPH--hemoprotein reductase] + O2 = 4-hydroxy-17beta-estradiol + oxidized [NADPH--hemoprotein reductase] + H2O + H(+). It catalyses the reaction 17beta-estradiol + reduced [NADPH--hemoprotein reductase] + O2 = 6alpha-hydroxy-17beta-estradiol + oxidized [NADPH--hemoprotein reductase] + H2O + H(+). It carries out the reaction 17beta-estradiol + reduced [NADPH--hemoprotein reductase] + O2 = 7alpha-hydroxy-17beta-estradiol + oxidized [NADPH--hemoprotein reductase] + H2O + H(+). The catalysed reaction is 17beta-estradiol + reduced [NADPH--hemoprotein reductase] + O2 = 15alpha-hydroxy-17beta-estradiol + oxidized [NADPH--hemoprotein reductase] + H2O + H(+). The enzyme catalyses (5Z,8Z,11Z)-eicosatrienoate + reduced [NADPH--hemoprotein reductase] + O2 = 19-hydroxy-(5Z,8Z,11Z)-eicosatrienoate + oxidized [NADPH--hemoprotein reductase] + H2O + H(+). It catalyses the reaction (5Z,8Z,11Z,14Z)-eicosatetraenoate + reduced [NADPH--hemoprotein reductase] + O2 = 16-hydroxy-(5Z,8Z,11Z,14Z)-eicosatetraenoate + oxidized [NADPH--hemoprotein reductase] + H2O + H(+). It carries out the reaction (5Z,8Z,11Z,14Z)-eicosatetraenoate + reduced [NADPH--hemoprotein reductase] + O2 = 17-hydroxy-(5Z,8Z,11Z,14Z)-eicosatetraenoate + oxidized [NADPH--hemoprotein reductase] + H2O + H(+). The catalysed reaction is (5Z,8Z,11Z,14Z)-eicosatetraenoate + reduced [NADPH--hemoprotein reductase] + O2 = 18-hydroxy-(5Z,8Z,11Z,14Z)-eicosatetraenoate + oxidized [NADPH--hemoprotein reductase] + H2O + H(+). The enzyme catalyses (5Z,8Z,11Z,14Z)-eicosatetraenoate + reduced [NADPH--hemoprotein reductase] + O2 = 19-hydroxy-(5Z,8Z,11Z,14Z)-eicosatetraenoate + oxidized [NADPH--hemoprotein reductase] + H2O + H(+). It catalyses the reaction (5Z,8Z,11Z,14Z,17Z)-eicosapentaenoate + reduced [NADPH--hemoprotein reductase] + O2 = 19-hydroxy-(5Z,8Z,11Z,14Z,17Z)-eicosapentaenoate + oxidized [NADPH--hemoprotein reductase] + H2O + H(+). It carries out the reaction (5Z,8Z,11Z,14Z)-eicosatetraenoate + reduced [NADPH--hemoprotein reductase] + O2 = (8R,9S)-epoxy-(5Z,11Z,14Z)-eicosatrienoate + oxidized [NADPH--hemoprotein reductase] + H2O + H(+). The catalysed reaction is (5Z,8Z,11Z,14Z)-eicosatetraenoate + reduced [NADPH--hemoprotein reductase] + O2 = (11R,12S)-epoxy-(5Z,8Z,14Z)-eicosatrienoate + oxidized [NADPH--hemoprotein reductase] + H2O + H(+). The enzyme catalyses (5Z,8Z,11Z,14Z)-eicosatetraenoate + reduced [NADPH--hemoprotein reductase] + O2 = (14S,15R)-epoxy-(5Z,8Z,11Z)-eicosatrienoate + oxidized [NADPH--hemoprotein reductase] + H2O + H(+). It catalyses the reaction (5Z,8Z,11Z,14Z)-eicosatetraenoate + reduced [NADPH--hemoprotein reductase] + O2 = (14R,15S)-epoxy-(5Z,8Z,11Z)-eicosatrienoate + oxidized [NADPH--hemoprotein reductase] + H2O + H(+). It carries out the reaction (5Z,8Z,11Z,14Z,17Z)-eicosapentaenoate + reduced [NADPH--hemoprotein reductase] + O2 = (17R,18S)-epoxy-(5Z,8Z,11Z,14Z)-eicosatetraenoate + oxidized [NADPH--hemoprotein reductase] + H2O + H(+). The catalysed reaction is (4Z,7Z,10Z,13Z,16Z,19Z)-docosahexaenoate + reduced [NADPH--hemoprotein reductase] + O2 = (19S,20R)-epoxy-(4Z,7Z,10Z,13Z,16Z)-docosapentaenoate + oxidized [NADPH--hemoprotein reductase] + H2O + H(+). The enzyme catalyses (4Z,7Z,10Z,13Z,16Z,19Z)-docosahexaenoate + reduced [NADPH--hemoprotein reductase] + O2 = (19R,20S)-epoxy-(4Z,7Z,10Z,13Z,16Z)-docosapentaenoate + oxidized [NADPH--hemoprotein reductase] + H2O + H(+). It catalyses the reaction all-trans-retinol + reduced [NADPH--hemoprotein reductase] + O2 = all-trans-retinal + oxidized [NADPH--hemoprotein reductase] + 2 H2O + H(+). It carries out the reaction all-trans-retinal + reduced [NADPH--hemoprotein reductase] + O2 = all-trans-retinoate + oxidized [NADPH--hemoprotein reductase] + H2O + 2 H(+). The catalysed reaction is (13S)-hydroperoxy-(9Z,11E)-octadecadienoate = 13-oxo-(9Z,11E)-octadecadienoate + H2O. The enzyme catalyses (12S)-hydroperoxy-(5Z,8Z,10E,14Z)-eicosatetraenoate = 12-oxo-(5Z,8Z,10E,14Z)-eicosatetraenoate + H2O. It catalyses the reaction (15S)-hydroperoxy-(5Z,8Z,11Z,13E)-eicosatetraenoate = 15-oxo-(5Z,8Z,11Z,13E)-eicosatetraenoate + H2O. It carries out the reaction (5S)-hydroperoxy-(6E,8Z,11Z,14Z)-eicosatetraenoate = 5-oxo-(6E,8Z,11Z,14Z)-eicosatetraenoate + H2O. It participates in steroid hormone biosynthesis. It functions in the pathway lipid metabolism; fatty acid metabolism. Its pathway is cofactor metabolism; retinol metabolism. Functionally, a cytochrome P450 monooxygenase involved in the metabolism of various endogenous substrates, including fatty acids, steroid hormones and vitamins. Mechanistically, uses molecular oxygen inserting one oxygen atom into a substrate, and reducing the second into a water molecule, with two electrons provided by NADPH via cytochrome P450 reductase (CPR; NADPH-ferrihemoprotein reductase). Catalyzes the hydroxylation of carbon-hydrogen bonds. Exhibits high catalytic activity for the formation of hydroxyestrogens from estrone (E1) and 17beta-estradiol (E2), namely 2-hydroxy E1 and E2, as well as D-ring hydroxylated E1 and E2 at the C15alpha and C16alpha positions. Displays different regioselectivities for polyunsaturated fatty acids (PUFA) hydroxylation. Catalyzes the epoxidation of double bonds of certain PUFA. Converts arachidonic acid toward epoxyeicosatrienoic acid (EET) regioisomers, 8,9-, 11,12-, and 14,15-EET, that function as lipid mediators in the vascular system. Displays an absolute stereoselectivity in the epoxidation of eicosapentaenoic acid (EPA) producing the 17(R),18(S) enantiomer. May play an important role in all-trans retinoic acid biosynthesis in extrahepatic tissues. Catalyzes two successive oxidative transformation of all-trans retinol to all-trans retinal and then to the active form all-trans retinoic acid. May also participate in eicosanoids metabolism by converting hydroperoxide species into oxo metabolites (lipoxygenase-like reaction, NADPH-independent). In Mesocricetus auratus (Golden hamster), this protein is Cytochrome P450 1A1 (CYP1A1).